The chain runs to 390 residues: Probable purine permease 10 (390 aa).

Transmembrane regions (helical) follow at residues 44 to 64 (WLRVTLYTFFVISGQTVATIL), 78 to 98 (LATVVQLVGFPVLLPYYILSF), 117 to 137 (VLVYVVLGLLVGADCYLYSIG), 140 to 160 (YLPVSTYSLICASQLAFNAFF), 169 to 189 (LTPIILNSLFLLTISSTLLAF), 204 to 224 (YVKGFICTVAASAGYGLVLSL), 241 to 261 (VMDMIIYVSLVASCVSVVGLF), 287 to 307 (LVWTAVTWQVFSIGGTGLIFE), 312 to 332 (FSNAISVLGLPVVPILAVIIF), and 336 to 356 (MNGLKVISMILAIWGFTSYVY). The segment at 370–390 (EITTTESPDPPEAEESTWQSK) is disordered.

The protein belongs to the purine permeases (TC 2.A.7.14) family.

The protein resides in the membrane. The protein is Probable purine permease 10 (PUP10) of Arabidopsis thaliana (Mouse-ear cress).